Reading from the N-terminus, the 332-residue chain is Putative potassium channel regulatory protein sup-10 (332 aa).

Residues 1 to 18 (MRYAVFIFLIVLIDLIYC) form the signal peptide. Residues 19 to 301 (WNSKRSFFIP…EISERNKRPA (283 aa)) lie on the Extracellular side of the membrane. N-linked (GlcNAc...) asparagine glycans are attached at residues N61, N107, and N166. Residues 302–322 (FVLVGLTGGIAVIILAFSIFW) form a helical membrane-spanning segment. Topologically, residues 323 to 332 (GLNGSGFNKD) are cytoplasmic.

As to quaternary structure, may form a complex with sup-9 and unc-93 where sup-10 and unc-93 act as regulatory subunits of the two pore potassium channel sup-9. Sup-10 may regulate sup-9 via sup-18. Low levels in body-wall muscles, eight vulval muscles, intestinal muscles and anal depressor muscle.

The protein localises to the membrane. Functionally, may contribute to coordination of muscle contraction as regulatory subunit of a nonessential potassium channel complex. In Caenorhabditis elegans, this protein is Putative potassium channel regulatory protein sup-10.